A 419-amino-acid polypeptide reads, in one-letter code: Peroxisome biogenesis factor 10 (419 aa).

Topologically, residues 1–27 (MPPSEEIKLRAVSPRPDFKANYLEFAN) are peroxisomal matrix. A helical membrane pass occupies residues 28–57 (APAIVRANQKDSYFETVLRDKLQNVIQIFK). Position 58 (Gly-58) is a topological domain, cytoplasmic. Residues 59–80 (QRFTHTHPEEIGVAAKALYLSL) traverse the membrane as a helical segment. The Peroxisomal matrix segment spans residues 81–108 (TTLLGTKTLGEEYVDLIYVSRDGKRIPR). A helical transmembrane segment spans residues 109 to 141 (YLARAGFIFAYAILPYFLTRLFRRLKSSSTPKD). The Cytoplasmic segment spans residues 142–158 (EVTEEKINKELPISLRI). Residues 159 to 185 (EKYLSNMSYSKVLDTIMNLHIAVFYFS) traverse the membrane as a helical segment. Topologically, residues 186 to 215 (GQFYNISKRFFSMRYAFGHKINKERTPNGN) are peroxisomal matrix. The helical transmembrane segment at 216–235 (YELLGGLIVLQLVMKSLGGF) threads the bilayer. The Cytoplasmic segment spans residues 236 to 419 (KGLIGSFTGN…RTLGYFLVVF (184 aa)). Zn(2+)-binding residues include Cys-298, Cys-301, Cys-313, His-315, Cys-318, Cys-321, Cys-334, and Cys-347. The RING-type zinc-finger motif lies at 298 to 360 (CMLCLSYMTN…FYIPTLNKIC (63 aa)).

This sequence belongs to the pex2/pex10/pex12 family. Component of the peroxisomal translocation complex, composed of at least PEX3, PEX2, PEX10 and PEX12. Interacts with PEX19.

It localises to the peroxisome membrane. It catalyses the reaction S-ubiquitinyl-[E2 ubiquitin-conjugating enzyme]-L-cysteine + [acceptor protein]-L-lysine = [E2 ubiquitin-conjugating enzyme]-L-cysteine + N(6)-ubiquitinyl-[acceptor protein]-L-lysine.. It functions in the pathway protein modification; protein ubiquitination. Its activity is regulated as follows. The E3 ubiquitin-protein ligase activity is stimulated by PEX12. In terms of biological role, E3 ubiquitin-protein ligase component of the peroxisomal translocation complex. The two types of peroxisomal matrix targeting signals, PTS1 and PTS2, are first recognized in the cytosol by their receptors PEX5 and PEX7, respectively, which then carry the cargo to the peroxisomal membrane. The peroxisomal targeting signal (PTS) receptor-cargo complexes interact with peroxisomal membrane protein (PMP) components of the docking complex. They have then additional downstream interactions with the translocation complex, leading to the transport of fully folded and oligomerized cargo into the peroxisome matrix. The peroxisomal translocation complex forms the retrotranslocation channel with each subunit contributing transmembrane segments that coassemble into an open channel that specifically allows the passage of PEX5 and PEX20 through the peroxisomal membrane. Specifically catalyzes monoubiquitination of PEX5 and/or PEX20 at 'Cys-6' and 'Cys-8', respectively, a modification that acts as a signal for PEX5 or PEX20 export from peroxisomes to the cytosol, thereby promoting PEX5 and PEX20 recycling. The chain is Peroxisome biogenesis factor 10 from Komagataella pastoris (Yeast).